A 932-amino-acid polypeptide reads, in one-letter code: UPF0182 protein Amet_0022 (932 aa).

Transmembrane regions (helical) follow at residues 14 to 34 (VIIG…SEIL), 60 to 80 (LQIG…YLIG), 104 to 124 (ILIL…AGSL), 166 to 186 (TSIL…MFLI), 208 to 228 (LLQI…LVLA), 256 to 276 (VTLW…TGVV), and 286 to 306 (LLLI…VISL).

This sequence belongs to the UPF0182 family.

It localises to the cell membrane. The protein is UPF0182 protein Amet_0022 of Alkaliphilus metalliredigens (strain QYMF).